The chain runs to 130 residues: Small ribosomal subunit protein uS8 (130 aa).

Belongs to the universal ribosomal protein uS8 family. In terms of assembly, part of the 30S ribosomal subunit. Contacts proteins S5 and S12.

Functionally, one of the primary rRNA binding proteins, it binds directly to 16S rRNA central domain where it helps coordinate assembly of the platform of the 30S subunit. The protein is Small ribosomal subunit protein uS8 of Enterobacter sp. (strain 638).